We begin with the raw amino-acid sequence, 533 residues long: Di/tripeptide-binding protein 3 (533 aa).

Positions 1–24 (MRKILPLRAWLAAGLILGSPFSHA) are cleaved as a signal peptide.

Belongs to the bacterial solute-binding protein 5 family. In terms of assembly, the complex is composed of two ATP-binding proteins (DppD and DppF), two transmembrane proteins (DppB and DppC) and a solute-binding protein (DppA3). Five orthologous SBPs (DppA1-A5) are present in P.aeruginosa, which increases the substrate specificity of the DppBCDF transporter.

In terms of biological role, part of the ABC transporter DppABCDF involved in the uptake of various di/tripeptides. Prefers dipeptides with acidic residues at the C-terminal end. Involved in the uptake of phaseolotoxin, a toxic tripeptide inhibiting the enzyme ornithine carbamoyltransferase. This is Di/tripeptide-binding protein 3 from Pseudomonas aeruginosa (strain UCBPP-PA14).